The chain runs to 499 residues: Salviol synthase (499 aa).

A helical transmembrane segment spans residues 4-24 (HIPSLVLCISFFIFFKIVSKL). Cys436 provides a ligand contact to heme.

This sequence belongs to the cytochrome P450 family. Heme is required as a cofactor. In terms of tissue distribution, expressed in leaf glandular trichomes.

Its subcellular location is the membrane. The catalysed reaction is ferruginol + reduced [NADPH--hemoprotein reductase] + O2 = salviol + oxidized [NADPH--hemoprotein reductase] + H2O + H(+). The protein operates within secondary metabolite biosynthesis; terpenoid biosynthesis. Monooxygenase involved in the biosynthesis of labdane-related diterpenes natural products. Catalyzes the oxidation of ferruginol to produce salviol. Salviol is an intermediate in the biosynthesis of carnosate, a potent antioxidant. This chain is Salviol synthase, found in Salvia pomifera (Apple sage).